A 667-amino-acid chain; its full sequence is Threonine--tRNA ligase (667 aa).

One can recognise a TGS domain in the interval 1–64; it reads MSEAISLTFP…TDGKIEIVTR (64 aa). Residues 245–553 are catalytic; that stretch reads DHRRLGREMD…LIENFAGHMP (309 aa). Cys347, His398, and His530 together coordinate Zn(2+).

It belongs to the class-II aminoacyl-tRNA synthetase family. Homodimer. Requires Zn(2+) as cofactor.

The protein localises to the cytoplasm. The catalysed reaction is tRNA(Thr) + L-threonine + ATP = L-threonyl-tRNA(Thr) + AMP + diphosphate + H(+). Functionally, catalyzes the attachment of threonine to tRNA(Thr) in a two-step reaction: L-threonine is first activated by ATP to form Thr-AMP and then transferred to the acceptor end of tRNA(Thr). Also edits incorrectly charged L-seryl-tRNA(Thr). The chain is Threonine--tRNA ligase from Agrobacterium fabrum (strain C58 / ATCC 33970) (Agrobacterium tumefaciens (strain C58)).